A 618-amino-acid polypeptide reads, in one-letter code: 25S rRNA (cytosine(2870)-C(5))-methyltransferase (618 aa).

The disordered stretch occupies residues 1 to 132 (MGSRRHKNKQ…NDAHPIFSDD (132 aa)). Residues 48–59 (RKKKKSKPFKKS) show a composition bias toward basic residues. Over residues 64–79 (EEVVEEDKDLPEVDLE) the composition is skewed to acidic residues. Residues 80–89 (ELSKARKSLF) are compositionally biased toward basic and acidic residues. Residues 90–123 (DDEEDDDEAGLVDEELKDEFDLEQEYDYDEDEDN) show a composition bias toward acidic residues. Residues 353–359 (AAAPGGK), aspartate 377, aspartate 404, and aspartate 421 contribute to the S-adenosyl-L-methionine site. The active-site Nucleophile is the cysteine 478. At serine 580 the chain carries Phosphoserine.

The protein belongs to the class I-like SAM-binding methyltransferase superfamily. RsmB/NOP family. Interacts with NOP53. Interacts with TRM112.

Its subcellular location is the nucleus. The protein resides in the nucleolus. The catalysed reaction is cytidine(2870) in 25S rRNA + S-adenosyl-L-methionine = 5-methylcytidine(2870) in 25S rRNA + S-adenosyl-L-homocysteine + H(+). Functionally, S-adenosyl-L-methionine-dependent methyltransferase that specifically methylates the C(5) position of cytosine 2870 (m5C2870) in 25S rRNA. Required for 60S ribosomal subunit synthesis and processing. This is 25S rRNA (cytosine(2870)-C(5))-methyltransferase (NOP2) from Saccharomyces cerevisiae (strain ATCC 204508 / S288c) (Baker's yeast).